The following is a 329-amino-acid chain: uncharacterized protein (329 aa).

In terms of domain architecture, SIS spans 38-184 (IVKLILKSQE…MACLMRAKNF (147 aa)). 56–61 (GVGKSA) contributes to the ATP binding site. 2 consecutive CBS domains span residues 211 to 267 (QTTN…GLSL) and 276 to 329 (TLKP…GLKA).

It belongs to the SIS family. GutQ/KpsF subfamily.

This is an uncharacterized protein from Helicobacter pylori (strain J99 / ATCC 700824) (Campylobacter pylori J99).